Consider the following 227-residue polypeptide: Phosphoribosylformylglycinamidine synthase subunit PurQ (227 aa).

The Glutamine amidotransferase type-1 domain maps to 3 to 225 (FAVIVLPGSN…VKNWRDTHVT (223 aa)). Catalysis depends on C86, which acts as the Nucleophile. Catalysis depends on residues H194 and E196.

Part of the FGAM synthase complex composed of 1 PurL, 1 PurQ and 2 PurS subunits.

It is found in the cytoplasm. It catalyses the reaction N(2)-formyl-N(1)-(5-phospho-beta-D-ribosyl)glycinamide + L-glutamine + ATP + H2O = 2-formamido-N(1)-(5-O-phospho-beta-D-ribosyl)acetamidine + L-glutamate + ADP + phosphate + H(+). It carries out the reaction L-glutamine + H2O = L-glutamate + NH4(+). It participates in purine metabolism; IMP biosynthesis via de novo pathway; 5-amino-1-(5-phospho-D-ribosyl)imidazole from N(2)-formyl-N(1)-(5-phospho-D-ribosyl)glycinamide: step 1/2. Its function is as follows. Part of the phosphoribosylformylglycinamidine synthase complex involved in the purines biosynthetic pathway. Catalyzes the ATP-dependent conversion of formylglycinamide ribonucleotide (FGAR) and glutamine to yield formylglycinamidine ribonucleotide (FGAM) and glutamate. The FGAM synthase complex is composed of three subunits. PurQ produces an ammonia molecule by converting glutamine to glutamate. PurL transfers the ammonia molecule to FGAR to form FGAM in an ATP-dependent manner. PurS interacts with PurQ and PurL and is thought to assist in the transfer of the ammonia molecule from PurQ to PurL. The chain is Phosphoribosylformylglycinamidine synthase subunit PurQ from Bacillus pumilus (strain SAFR-032).